The following is a 401-amino-acid chain: Argininosuccinate synthase (401 aa).

8 to 16 (AYSGGLDTS) contacts ATP. Y87 is a binding site for L-citrulline. G117 is a binding site for ATP. 3 residues coordinate L-aspartate: T119, N123, and D124. Residue N123 coordinates L-citrulline. Positions 127, 175, 259, and 271 each coordinate L-citrulline.

The protein belongs to the argininosuccinate synthase family. Type 1 subfamily. As to quaternary structure, homotetramer.

The protein localises to the cytoplasm. The enzyme catalyses L-citrulline + L-aspartate + ATP = 2-(N(omega)-L-arginino)succinate + AMP + diphosphate + H(+). It functions in the pathway amino-acid biosynthesis; L-arginine biosynthesis; L-arginine from L-ornithine and carbamoyl phosphate: step 2/3. This Corynebacterium efficiens (strain DSM 44549 / YS-314 / AJ 12310 / JCM 11189 / NBRC 100395) protein is Argininosuccinate synthase.